The primary structure comprises 457 residues: MSLTLSHDFVFIIDFSCSQFAPFSPKRVTTVNYNHPQASDPYKMNDEQAIYDYLLDLVQSVEGERVLEVMGNLFLSGQGSSQGQVSTHLEKVIRVKNNTEEFNYFFNRCCYILINYWQLSPQTQRSIPQLVNMVEKAVANISPGGNTKGNIRQLVKNFTLSEQFVRLKRLASVVSTKFETKSSSVGTLIHRYPYLYDYCLMGDDSSREHRQTIHRIKAQNERKFEINLSQYVTYRVRMARTNKAGLILPDKELIKPVQNPTLLSDRDLNSSLKHFVGSVENGQSYRSLSKSFRNHVAYTQSFGTFKDELYEYIRGSLQNNYKQGSFDKKLFDLFQNAYPECNQQKPTEFLMMRTSSQLLNFLVVEGSKNPDHYVFIDLISNIGVKKTIGVLLKIVLFCSKVKPYLEKRFSILFNHYESVAREGVPWLVKTLENMQVAFSIHFGRVDLSSLNRSHLPT.

This is an uncharacterized protein from Synechocystis sp. (strain ATCC 27184 / PCC 6803 / Kazusa).